The sequence spans 92 residues: Co-chaperonin GroES (92 aa).

This sequence belongs to the GroES chaperonin family. Heptamer of 7 subunits arranged in a ring. Interacts with the chaperonin GroEL.

It localises to the cytoplasm. Functionally, together with the chaperonin GroEL, plays an essential role in assisting protein folding. The GroEL-GroES system forms a nano-cage that allows encapsulation of the non-native substrate proteins and provides a physical environment optimized to promote and accelerate protein folding. GroES binds to the apical surface of the GroEL ring, thereby capping the opening of the GroEL channel. This is Co-chaperonin GroES from Methanosarcina mazei (strain ATCC BAA-159 / DSM 3647 / Goe1 / Go1 / JCM 11833 / OCM 88) (Methanosarcina frisia).